The sequence spans 91 residues: ATP synthase subunit c 1 (91 aa).

Transmembrane regions (helical) follow at residues 4 to 24 and 53 to 73; these read FTMC…GTAI and IGLA…LIIL.

The protein belongs to the ATPase C chain family. F-type ATPases have 2 components, F(1) - the catalytic core - and F(0) - the membrane proton channel. F(1) has five subunits: alpha(3), beta(3), gamma(1), delta(1), epsilon(1). F(0) has three main subunits: a(1), b(2) and c(10-14). The alpha and beta chains form an alternating ring which encloses part of the gamma chain. F(1) is attached to F(0) by a central stalk formed by the gamma and epsilon chains, while a peripheral stalk is formed by the delta and b chains.

The protein resides in the cell inner membrane. Its function is as follows. F(1)F(0) ATP synthase produces ATP from ADP in the presence of a proton or sodium gradient. F-type ATPases consist of two structural domains, F(1) containing the extramembraneous catalytic core and F(0) containing the membrane proton channel, linked together by a central stalk and a peripheral stalk. During catalysis, ATP synthesis in the catalytic domain of F(1) is coupled via a rotary mechanism of the central stalk subunits to proton translocation. Key component of the F(0) channel; it plays a direct role in translocation across the membrane. A homomeric c-ring of between 10-14 subunits forms the central stalk rotor element with the F(1) delta and epsilon subunits. This is ATP synthase subunit c 1 from Pelobacter propionicus (strain DSM 2379 / NBRC 103807 / OttBd1).